A 520-amino-acid polypeptide reads, in one-letter code: Macrophage receptor MARCO (520 aa).

Topologically, residues 1–43 (MRNKKILKEDELLSETQQAAFHQIAMEPFEINVPKPKRRNGVN) are cytoplasmic. The helical; Signal-anchor for type II membrane protein transmembrane segment at 44-64 (FSLAVVVIYLILLTAGAGLLV) threads the bilayer. At 65 to 520 (VQVLNLQARL…EEDAGVECSV (456 aa)) the chain is on the extracellular side. Residues asparagine 83 and asparagine 136 are each glycosylated (N-linked (GlcNAc...) asparagine). Residues 142–423 (GMFRIKGEQG…KGERGENSVS (282 aa)) form a disordered region. The Collagen-like domain maps to 147–419 (KGEQGAPGLQ…VKGEKGERGE (273 aa)). Low complexity-rich tracts occupy residues 203–227 (EAGL…PQGE), 290–345 (LAGF…PGAT), and 380–398 (SPGL…QKGD). The segment covering 410–419 (VKGEKGERGE) has biased composition (basic and acidic residues). Positions 424–519 (VRIVGSSNRG…HEEDAGVECS (96 aa)) constitute an SRCR domain. Cystine bridges form between cysteine 447–cysteine 508, cysteine 460–cysteine 518, and cysteine 488–cysteine 498.

In terms of assembly, homotrimer; disulfide-linked. Trimers may assemble in larger oligomers thus resulting in the creation of a large surface capable of interacting with very large ligands. Post-translationally, N-glycosylated. Expressed in alveolar macrophages (at protein level). Detected in macrophages from various tissues including thymus, kidney, Kupffer cells of liver, and spleen.

It is found in the cell membrane. In terms of biological role, pattern recognition receptor (PRR) which binds Gram-positive and Gram-negative bacteria. Also plays a role in binding of unopsonized particles by alveolar macrophages. Binds to the secretoglobin SCGB3A2. This chain is Macrophage receptor MARCO (MARCO), found in Homo sapiens (Human).